Here is a 364-residue protein sequence, read N- to C-terminus: Aminomethyltransferase (364 aa).

It belongs to the GcvT family. In terms of assembly, the glycine cleavage system is composed of four proteins: P, T, L and H.

It catalyses the reaction N(6)-[(R)-S(8)-aminomethyldihydrolipoyl]-L-lysyl-[protein] + (6S)-5,6,7,8-tetrahydrofolate = N(6)-[(R)-dihydrolipoyl]-L-lysyl-[protein] + (6R)-5,10-methylene-5,6,7,8-tetrahydrofolate + NH4(+). Its function is as follows. The glycine cleavage system catalyzes the degradation of glycine. This chain is Aminomethyltransferase, found in Shigella flexneri.